The chain runs to 439 residues: Xaa-Pro dipeptidase (439 aa).

Residues Asp-244, Asp-255, His-335, Glu-380, and Glu-419 each coordinate Mn(2+).

It belongs to the peptidase M24B family. Bacterial-type prolidase subfamily. Mn(2+) is required as a cofactor.

It carries out the reaction Xaa-L-Pro dipeptide + H2O = an L-alpha-amino acid + L-proline. Its function is as follows. Splits dipeptides with a prolyl residue in the C-terminal position. The polypeptide is Xaa-Pro dipeptidase (Shewanella sp. (strain MR-4)).